The primary structure comprises 102 residues: Antimicrobial peptide 1 (102 aa).

Residues 1–26 (MASTKLFFSVITVMMLIAMASEMVNG) form the signal peptide. Cystine bridges form between Cys37-Cys90, Cys47-Cys102, and Cys49-Cys75.

It is found in the secreted. Its function is as follows. Antimicrobial peptide which inhibits the growth of a variety of fungi, oomycetes, Gram-positive bacterial phytopatogenes and S.cerevisiae in vitro. No activity against E.coli. This Macadamia integrifolia (Macadamia nut) protein is Antimicrobial peptide 1.